The chain runs to 298 residues: Bifunctional protein FolD (298 aa).

Residues 166-168 (GRS), S191, and I232 each bind NADP(+).

This sequence belongs to the tetrahydrofolate dehydrogenase/cyclohydrolase family. As to quaternary structure, homodimer.

It catalyses the reaction (6R)-5,10-methylene-5,6,7,8-tetrahydrofolate + NADP(+) = (6R)-5,10-methenyltetrahydrofolate + NADPH. The catalysed reaction is (6R)-5,10-methenyltetrahydrofolate + H2O = (6R)-10-formyltetrahydrofolate + H(+). Its pathway is one-carbon metabolism; tetrahydrofolate interconversion. In terms of biological role, catalyzes the oxidation of 5,10-methylenetetrahydrofolate to 5,10-methenyltetrahydrofolate and then the hydrolysis of 5,10-methenyltetrahydrofolate to 10-formyltetrahydrofolate. The chain is Bifunctional protein FolD from Parvibaculum lavamentivorans (strain DS-1 / DSM 13023 / NCIMB 13966).